We begin with the raw amino-acid sequence, 1847 residues long: Peripheral-type benzodiazepine receptor-associated protein 1 (1847 aa).

Disordered regions lie at residues 57–81 (EESS…GTET), 282–318 (NQRE…EDDV), and 560–626 (SGPK…DTAS). 2 stretches are compositionally biased toward low complexity: residues 294-310 (GSTA…GAPG) and 600-613 (SLSN…IHNS). Positions 651–718 (ARIQVFLARY…PSNFVERVSD (68 aa)) constitute an SH3 1 domain. Positions 728–787 (ELADSSHSSGPELSFLSGGGGGCSSGGQSSGGRSQPRPEEEATGDELSLSPPPEGLGEPL) are disordered. Positions 744–757 (SGGGGGCSSGGQSS) are enriched in gly residues. Fibronectin type-III domains follow at residues 789-880 (VPYP…AGAG), 882-974 (VPSQ…TLPA), and 979-1077 (APLD…PALA). 5 disordered regions span residues 1107 to 1174 (LGYT…EGPD), 1191 to 1215 (DAGP…VCHR), 1240 to 1307 (NSLV…ILEQ), 1322 to 1478 (FSIP…ESSL), and 1514 to 1616 (PTDG…SHQD). The span at 1122-1133 (TQDSPASLSTEM) shows a compositional bias: polar residues. Basic and acidic residues predominate over residues 1203-1215 (LTQKEPSTEVCHR). Residues 1253–1266 (DIQEEEEEEEEEEE) are compositionally biased toward acidic residues. Over residues 1272–1284 (WSFQKQVAGNSIG) the composition is skewed to polar residues. 2 stretches are compositionally biased toward acidic residues: residues 1296–1305 (CETDSDEEIL) and 1325–1335 (PEEEEEEDEEE). Residues 1340–1352 (PGPSSSSQDPSQP) are compositionally biased toward low complexity. Composition is skewed to basic and acidic residues over residues 1412–1421 (RPQDPREHCS) and 1546–1578 (AWEK…ESRG). The 69-residue stretch at 1617–1685 (LPLRVFVALF…PCNMVAEVAV (69 aa)) folds into the SH3 2 domain. Disordered regions lie at residues 1701–1747 (PPNV…PGPP) and 1818–1847 (LEGP…RVQC). Positions 1756 to 1823 (KTSRPMVAAF…PSNFLEGPGP (68 aa)) constitute an SH3 3 domain.

The protein belongs to the RIMBP family. Interacts with RIMS1 and RIMS2. Interacts with TSPO. Interacts with CACNA1A. In terms of tissue distribution, specifically expressed in brain. High expression level in the limbic system such as the nucleus accumbens, septum, and hippocampus, as well as on the cerebellum and pineal gland. Abundant in the CA1 region of the hippocampus.

It localises to the cytoplasm. The protein localises to the mitochondrion. In terms of biological role, required for synaptic transmission regulation. It probably controls the recruitement of voltage-gated calcium channels to the presynaptic membrane, and modulates neurotransmitter release. This chain is Peripheral-type benzodiazepine receptor-associated protein 1, found in Rattus norvegicus (Rat).